We begin with the raw amino-acid sequence, 229 residues long: Elongation factor 1-delta 1 (229 aa).

Positions 80-109 (ESTAVPSASTPDVADAKAPAADDDDDDDVD) are disordered. Acidic residues predominate over residues 100–109 (ADDDDDDDVD).

It belongs to the EF-1-beta/EF-1-delta family. In terms of assembly, EF-1 is composed of 4 subunits: alpha, beta (1B-alpha=beta'), delta (1B-beta), and gamma (1B-gamma).

Its function is as follows. EF-1-beta and EF-1-beta' stimulate the exchange of GDP bound to EF-1-alpha to GTP. This Oryza sativa subsp. japonica (Rice) protein is Elongation factor 1-delta 1.